Consider the following 64-residue polypeptide: Alpha-conotoxin SI (64 aa).

The signal sequence occupies residues 1–21 (MGMRMMFTVFLLVVLATTVVS). Positions 22 to 49 (FPSDRASDGRDDEAKDERSDMHESDRKE) are excised as a propeptide. The disordered stretch occupies residues 23–47 (PSDRASDGRDDEAKDERSDMHESDR). Positions 26-47 (RASDGRDDEAKDERSDMHESDR) are enriched in basic and acidic residues. Disulfide bonds link Cys51-Cys56 and Cys52-Cys62. At Cys62 the chain carries Cysteine amide.

The protein belongs to the conotoxin A superfamily. In terms of tissue distribution, expressed by the venom duct.

It localises to the secreted. Alpha-conotoxins act on postsynaptic membranes, they bind to the nicotinic acetylcholine receptors (nAChR) and thus inhibit them. Is active on muscle nAChR (IC(50)=113 nM on adult subtype (alpha-1-beta-1-gamma-delta/CHRNA1-CHRNB1-CHRNG-CHRND) and IC(50)=142 nM on fetal subtype (alpha-1-beta-1-delta-epsilon/CHRNA1-CHRNB1-CHRND-CHRNE)). On mice muscle receptors, its higher affinity site is the alpha/delta nAChR subunit interface. On Torpedo receptors, it does not distinguish between alpha/delta and alpha/gamma acetylcholine-binding sites. In vivo, causes paralysis followed by death when injected into goldfish. In contrast, has no effect on mice, when similar doses are intraperitoneally or intracerebrally injected. The polypeptide is Alpha-conotoxin SI (Conus striatus (Striated cone)).